We begin with the raw amino-acid sequence, 566 residues long: Proline--tRNA ligase (566 aa).

This sequence belongs to the class-II aminoacyl-tRNA synthetase family. ProS type 1 subfamily. In terms of assembly, homodimer.

The protein localises to the cytoplasm. The catalysed reaction is tRNA(Pro) + L-proline + ATP = L-prolyl-tRNA(Pro) + AMP + diphosphate. Its function is as follows. Catalyzes the attachment of proline to tRNA(Pro) in a two-step reaction: proline is first activated by ATP to form Pro-AMP and then transferred to the acceptor end of tRNA(Pro). As ProRS can inadvertently accommodate and process non-cognate amino acids such as alanine and cysteine, to avoid such errors it has two additional distinct editing activities against alanine. One activity is designated as 'pretransfer' editing and involves the tRNA(Pro)-independent hydrolysis of activated Ala-AMP. The other activity is designated 'posttransfer' editing and involves deacylation of mischarged Ala-tRNA(Pro). The misacylated Cys-tRNA(Pro) is not edited by ProRS. In Bacillus anthracis (strain A0248), this protein is Proline--tRNA ligase.